Here is a 116-residue protein sequence, read N- to C-terminus: MNLITTIIAITITLSAVLATVSFWLPQITPDAEKLSPYECGFDPLGSARLPFSLRFFLIAILFLLFDLEIALLLPLPWGDQLATPALTLAWSAAVLALLTLGLIYEWTQGGLEWAE.

3 helical membrane passes run 3 to 23, 56 to 76, and 85 to 105; these read LITT…TVSF, FFLI…LLPL, and PALT…GLIY.

This sequence belongs to the complex I subunit 3 family.

It localises to the mitochondrion membrane. The catalysed reaction is a ubiquinone + NADH + 5 H(+)(in) = a ubiquinol + NAD(+) + 4 H(+)(out). Functionally, core subunit of the mitochondrial membrane respiratory chain NADH dehydrogenase (Complex I) that is believed to belong to the minimal assembly required for catalysis. Complex I functions in the transfer of electrons from NADH to the respiratory chain. The immediate electron acceptor for the enzyme is believed to be ubiquinone. The polypeptide is NADH-ubiquinone oxidoreductase chain 3 (MT-ND3) (Salmo trutta (Brown trout)).